The following is a 675-amino-acid chain: PTS system glucose-specific EIICBA component (675 aa).

Residues 3–414 form the PTS EIIC type-1 domain; the sequence is KKLFGQMQRI…FNYKTPGRED (412 aa). A run of 11 helical transmembrane segments spans residues 16-36, 59-79, 81-101, 126-146, 170-190, 211-231, 273-293, 303-323, 328-348, 355-375, and 378-398; these read LMLP…GTAF, MLTG…ALGV, IGLA…FIIL, VLGI…GALA, FVPI…AIIW, LAVF…LHHI, FMQG…LAIY, VVAG…ITEP, FLFV…LSFL, VHLG…GILP, and TAWW…YFVF. The PTS EIIB type-1 domain maps to 425 to 506; sequence SQLPFDVLKA…AKIISGEITK (82 aa). The active-site Phosphocysteine intermediate; for EIIB activity is Cys447. Positions 547-651 constitute a PTS EIIA type-1 domain; that stretch reads DKVFSEKMMG…SIITPVIITN (105 aa). The active-site Tele-phosphohistidine intermediate; for EIIA activity is His599.

It is found in the cell membrane. It catalyses the reaction N(pros)-phospho-L-histidyl-[protein] + D-glucose(out) = D-glucose 6-phosphate(in) + L-histidyl-[protein]. Functionally, the phosphoenolpyruvate-dependent sugar phosphotransferase system (sugar PTS), a major carbohydrate active transport system, catalyzes the phosphorylation of incoming sugar substrates concomitantly with their translocation across the cell membrane. This system is involved in glucose transport. The sequence is that of PTS system glucose-specific EIICBA component (ptsG) from Staphylococcus epidermidis.